The primary structure comprises 257 residues: Probable enoyl-CoA hydratase (257 aa).

The protein belongs to the enoyl-CoA hydratase/isomerase family.

It catalyses the reaction a (3S)-3-hydroxyacyl-CoA = a (2E)-enoyl-CoA + H2O. The enzyme catalyses a 4-saturated-(3S)-3-hydroxyacyl-CoA = a (3E)-enoyl-CoA + H2O. Functionally, could possibly oxidize fatty acids using specific components. In Rhizobium meliloti (strain 1021) (Ensifer meliloti), this protein is Probable enoyl-CoA hydratase (fadB1).